Reading from the N-terminus, the 91-residue chain is RNA-binding protein Hfq (91 aa).

One can recognise a Sm domain in the interval 9 to 68 (DPYLNALRRERIPVSIYLVNGIKLQGQIESFDQFVILLKNTVNQMVYKHAISTVVPARSV). Residues 68–91 (VSHHNNNHHTTPTEAVENVETQAE) are disordered.

The protein belongs to the Hfq family. As to quaternary structure, homohexamer.

Its function is as follows. RNA chaperone that binds small regulatory RNA (sRNAs) and mRNAs to facilitate mRNA translational regulation in response to envelope stress, environmental stress and changes in metabolite concentrations. Also binds with high specificity to tRNAs. In Haemophilus influenzae (strain 86-028NP), this protein is RNA-binding protein Hfq.